Reading from the N-terminus, the 149-residue chain is uncharacterized protein (149 aa).

Disordered stretches follow at residues 24-74 (TSQG…NDLE) and 129-149 (AIQDDAGIPNPEMPKSAPRAP). Positions 28–42 (EDVKPEPKPEVDEKV) are enriched in basic and acidic residues. Residues 102-131 (SELESLKEKVSSATSMEELREIMEEFRAIQ) are a coiled coil.

This is an uncharacterized protein from Archaeoglobus fulgidus (strain ATCC 49558 / DSM 4304 / JCM 9628 / NBRC 100126 / VC-16).